The following is a 79-amino-acid chain: CATR tumorigenic conversion 1 protein (79 aa).

The polypeptide is CATR tumorigenic conversion 1 protein (CATR1) (Homo sapiens (Human)).